A 78-amino-acid chain; its full sequence is NAD(P)H-quinone oxidoreductase subunit O (78 aa).

The protein belongs to the complex I NdhO subunit family. In terms of assembly, NDH-1 can be composed of about 15 different subunits; different subcomplexes with different compositions have been identified which probably have different functions.

The protein resides in the cellular thylakoid membrane. It catalyses the reaction a plastoquinone + NADH + (n+1) H(+)(in) = a plastoquinol + NAD(+) + n H(+)(out). The catalysed reaction is a plastoquinone + NADPH + (n+1) H(+)(in) = a plastoquinol + NADP(+) + n H(+)(out). Its function is as follows. NDH-1 shuttles electrons from an unknown electron donor, via FMN and iron-sulfur (Fe-S) centers, to quinones in the respiratory and/or the photosynthetic chain. The immediate electron acceptor for the enzyme in this species is believed to be plastoquinone. Couples the redox reaction to proton translocation, and thus conserves the redox energy in a proton gradient. Cyanobacterial NDH-1 also plays a role in inorganic carbon-concentration. In Prochlorococcus marinus (strain AS9601), this protein is NAD(P)H-quinone oxidoreductase subunit O.